The chain runs to 285 residues: Aquaporin PIP2-5 (285 aa).

The next 2 membrane-spanning stretches (helical) occupy residues 38 to 58 (AVIA…ATVI) and 75 to 95 (CGGV…FILV). The NPA 1 signature appears at 107–109 (NPA). The next 3 helical transmembrane spans lie at 126 to 146 (LLYI…VKGF), 168 to 188 (GTGL…VFSA), and 202 to 222 (VLAP…TIPI). The NPA 2 signature appears at 228-230 (NPA). The helical transmembrane segment at 250–270 (IFWVGPFIGAAIAAAYHQYVL) threads the bilayer.

This sequence belongs to the MIP/aquaporin (TC 1.A.8) family. PIP (TC 1.A.8.11) subfamily. As to quaternary structure, homomers. May interact with PIP1-2 to form heteromers. Specifically expressed in roots, in the exodermis, endodermis and xylem parenchyma. Polar localization to the external periclinal side of epidermal cells in root apices.

It is found in the cell membrane. Functionally, water channel required to facilitate the transport of water across cell membrane. Its function is impaired by Hg(2+). May play a role in water uptake from the root surface. Active as homomers. Increased activity when heteromerization with PIP1-2. The protein is Aquaporin PIP2-5 (PIP2-5) of Zea mays (Maize).